Reading from the N-terminus, the 129-residue chain is Holo-[acyl-carrier-protein] synthase (129 aa).

Residues Asp-8 and Glu-60 each contribute to the Mg(2+) site.

Belongs to the P-Pant transferase superfamily. AcpS family. Requires Mg(2+) as cofactor.

The protein resides in the cytoplasm. The catalysed reaction is apo-[ACP] + CoA = holo-[ACP] + adenosine 3',5'-bisphosphate + H(+). In terms of biological role, transfers the 4'-phosphopantetheine moiety from coenzyme A to a Ser of acyl-carrier-protein. This is Holo-[acyl-carrier-protein] synthase from Anaeromyxobacter sp. (strain Fw109-5).